Consider the following 86-residue polypeptide: Protein GOLVEN 1 (86 aa).

The first 29 residues, 1 to 29, serve as a signal peptide directing secretion; the sequence is MSCSLRSGLVIVFCFILLLLSSNVGCASA. Positions 30-70 are excised as a propeptide; the sequence is ARRLRSHKHHHHKVASLDVFNGGERRRALGGVETGEEVVVM. At Tyr-72 the chain carries Sulfotyrosine. The residue at position 80 (Pro-80) is a Hydroxyproline. Residues 84–86 constitute a propeptide that is removed on maturation; the sequence is EKS.

It belongs to the RGF family. In terms of assembly, binds to LRR receptor-like serine/threonine-protein kinases to trigger their dimerization with SERK proteins and subsequent signaling. As to expression, expressed in stems, hypocotyls, cotyledons, leaves, flowers, shoot apex, siliques, stamens and petals.

The protein resides in the endoplasmic reticulum. It is found in the secreted. Functionally, signaling peptide (root growth factor) that regulates the pattern of root growth and lateral root development by modulating the length and the number of cortical cells in the root apical meristem (RAM), and the anticlinal asymmetric cell divisions in lateral root initiation cells. Also involved in the regulation of hypocotyl bending and root gravitropism in a PIN2-traffic dependent manner, thus influencing the formation of auxin gradients. Maintains the postembryonic root stem cell niche. The polypeptide is Protein GOLVEN 1 (Arabidopsis thaliana (Mouse-ear cress)).